Reading from the N-terminus, the 446-residue chain is UDP-N-acetylglucosamine--dolichyl-phosphate N-acetylglucosaminephosphotransferase (446 aa).

2 helical membrane-spanning segments follow: residues 1-21 (MIES…LMNQ) and 25-45 (PLLS…MFIP). UDP-N-acetyl-alpha-D-glucosamine contacts are provided by residues 59–61 (KDM) and Glu71. Helical transmembrane passes span 73–93 (MGAV…PVLF) and 123–143 (LLGA…LGIL). Position 154 (Lys154) interacts with dolichyl phosphate. 2 helical membrane-spanning segments follow: residues 155-175 (FFLP…DYGV) and 191-211 (SLIN…IFCP). 208-216 (IFCPNSINI) contacts dolichyl phosphate. Asn215 serves as a coordination point for Mg(2+). The next 4 membrane-spanning stretches (helical) occupy residues 216 to 236 (IIAG…LVIA), 254 to 274 (AHLL…GLLK), 282 to 302 (VFVG…VGIL), and 311 to 331 (LFFI…FGLV). Asn221 is a binding site for UDP-N-acetyl-alpha-D-glucosamine. Asp286 contributes to the Mg(2+) binding site. 335–337 (RHR) is a UDP-N-acetyl-alpha-D-glucosamine binding site. N-linked (GlcNAc...) asparagine glycosylation occurs at Asn395. The helical transmembrane segment at 412-432 (DHLTICIMGLQLLTGIFGLII) threads the bilayer.

This sequence belongs to the glycosyltransferase 4 family. Requires Mg(2+) as cofactor.

The protein resides in the endoplasmic reticulum membrane. It catalyses the reaction a di-trans,poly-cis-dolichyl phosphate + UDP-N-acetyl-alpha-D-glucosamine = an N-acetyl-alpha-D-glucosaminyl-diphospho-di-trans,poly-cis-dolichol + UMP. The protein operates within protein modification; protein glycosylation. Its activity is regulated as follows. Inhibited by natural nucleoside antibiotic tunicamycin, which acts as a structural analog and competitor of UDP-GlcNAc. UDP-N-acetylglucosamine--dolichyl-phosphate N-acetylglucosaminephosphotransferase that operates in the biosynthetic pathway of dolichol-linked oligosaccharides, the glycan precursors employed in protein asparagine (N)-glycosylation. The assembly of dolichol-linked oligosaccharides begins on the cytosolic side of the endoplasmic reticulum membrane and finishes in its lumen. The sequential addition of sugars to dolichol pyrophosphate produces dolichol-linked oligosaccharides containing fourteen sugars, including two GlcNAcs, nine mannoses and three glucoses. Once assembled, the oligosaccharide is transferred from the lipid to nascent proteins by oligosaccharyltransferases. Catalyzes the initial step of dolichol-linked oligosaccharide biosynthesis, transfering GlcNAc-1-P from cytosolic UDP-GlcNAc onto the carrier lipid dolichyl phosphate (P-dolichol), yielding GlcNAc-P-P-dolichol embedded in the cytoplasmic leaflet of the endoplasmic reticulum membrane. The chain is UDP-N-acetylglucosamine--dolichyl-phosphate N-acetylglucosaminephosphotransferase (gpt2) from Schizosaccharomyces pombe (strain 972 / ATCC 24843) (Fission yeast).